Reading from the N-terminus, the 792-residue chain is DEAD-box ATP-dependent RNA helicase 40 (792 aa).

Low complexity predominate over residues 1 to 16 (MSAGTAPAAPRYAPDD). Disordered stretches follow at residues 1–25 (MSAG…PWRG) and 44–118 (TQYE…PLPA). One can recognise a WW domain in the interval 17-51 (PSLPKPWRGLVDGTTGYLYYWNPETNITQYEKPLP). The segment covering 52-68 (PEDQLPPPPPLPPPPPR) has biased composition (pro residues). Basic and acidic residues-rich tracts occupy residues 70–80 (GRGDRDRDRRD) and 88–108 (PRRD…DHRS). Residues 150–178 (TSFETGGFPPEILKEIQRAGFSSPTPIQA) carry the Q motif motif. In terms of domain architecture, Helicase ATP-binding spans 181–355 (WPIALQCQDV…EDLLVHPVQV (175 aa)). 194–201 (AKTGSGKT) contacts ATP. The DEAD box motif lies at 303-306 (DEAD). Positions 384-528 (RLEQILRSQD…RVPRDLADMA (145 aa)) constitute a Helicase C-terminal domain. The interval 523–792 (DLADMASRGG…NATVQNGGDN (270 aa)) is disordered. 2 stretches are compositionally biased toward basic and acidic residues: residues 543 to 560 (TRSD…RYGG) and 572 to 588 (DSSR…DGRS). 2 stretches are compositionally biased toward basic residues: residues 589-599 (RRSGRGRSRSR) and 609-654 (RSPK…RRHE). A compositionally biased stretch (basic and acidic residues) spans 668 to 708 (GHGERKRTPEADPSRNHTNHSDPKDDRHPEDGKVGKVDLDR). Residues 725–739 (GKTSRSVSPGNQVEG) show a composition bias toward polar residues. A compositionally biased stretch (acidic residues) spans 764 to 777 (DEEEGMIDEDGEIA).

It belongs to the DEAD box helicase family. DDX5/DBP2 subfamily.

It localises to the nucleus. It carries out the reaction ATP + H2O = ADP + phosphate + H(+). Its function is as follows. ATP-dependent RNA helicase involved nonsense-mediated mRNA decay and ribosome biogenesis through rRNA processing. The polypeptide is DEAD-box ATP-dependent RNA helicase 40 (Oryza sativa subsp. japonica (Rice)).